A 268-amino-acid polypeptide reads, in one-letter code: Type-5 uracil-DNA glycosylase (268 aa).

The segment at 1 to 29 (MHPKTGRAFRSPVEPGSGWPGDPATPQTP) is disordered. Residues C57, C60, C161, and C176 each coordinate [4Fe-4S] cluster.

This sequence belongs to the uracil-DNA glycosylase (UDG) superfamily. Type 5 (UDGb) family.

DNA glycosylase with broad substrate specificity. The sequence is that of Type-5 uracil-DNA glycosylase from Mycobacterium bovis (strain ATCC BAA-935 / AF2122/97).